Reading from the N-terminus, the 341-residue chain is tRNA N6-adenosine threonylcarbamoyltransferase (341 aa).

His-111 and His-115 together coordinate Fe cation. Residues 134 to 138, Asp-167, Gly-180, and Asn-276 each bind substrate; that span reads LVSGG. Fe cation is bound at residue Asp-304.

It belongs to the KAE1 / TsaD family. Fe(2+) serves as cofactor.

It is found in the cytoplasm. The enzyme catalyses L-threonylcarbamoyladenylate + adenosine(37) in tRNA = N(6)-L-threonylcarbamoyladenosine(37) in tRNA + AMP + H(+). Required for the formation of a threonylcarbamoyl group on adenosine at position 37 (t(6)A37) in tRNAs that read codons beginning with adenine. Is involved in the transfer of the threonylcarbamoyl moiety of threonylcarbamoyl-AMP (TC-AMP) to the N6 group of A37, together with TsaE and TsaB. TsaD likely plays a direct catalytic role in this reaction. In Pseudomonas entomophila (strain L48), this protein is tRNA N6-adenosine threonylcarbamoyltransferase.